Reading from the N-terminus, the 84-residue chain is Large ribosomal subunit protein bL27 (84 aa).

The segment at 1–21 (MAHKKGGGSTKNGRDSNPKYL) is disordered.

Belongs to the bacterial ribosomal protein bL27 family.

The sequence is that of Large ribosomal subunit protein bL27 from Chlorobaculum parvum (strain DSM 263 / NCIMB 8327) (Chlorobium vibrioforme subsp. thiosulfatophilum).